Reading from the N-terminus, the 290-residue chain is Membrane protein insertase YidC (290 aa).

The first 19 residues, 1-19, serve as a signal peptide directing secretion; the sequence is MKKKALLPLFLGIMVFLAG. Cysteine 20 is lipidated: N-palmitoyl cysteine. Cysteine 20 carries the S-diacylglycerol cysteine lipid modification. The next 5 helical transmembrane spans lie at 56–76, 134–154, 176–196, 207–224, and 229–251; these read YGLA…PFML, MLGC…YFVL, PDIW…YVSS, GYMM…ISLS, and LGLY…NIYY. The interval 270 to 290 is disordered; the sequence is HNGGSNKKGKNTQVVSKKKKK.

It belongs to the OXA1/ALB3/YidC family. Type 2 subfamily.

Its subcellular location is the cell membrane. Required for the insertion and/or proper folding and/or complex formation of integral membrane proteins into the membrane. Involved in integration of membrane proteins that insert both dependently and independently of the Sec translocase complex, as well as at least some lipoproteins. This chain is Membrane protein insertase YidC, found in Staphylococcus aureus (strain Mu3 / ATCC 700698).